We begin with the raw amino-acid sequence, 562 residues long: Urocanate hydratase (562 aa).

NAD(+)-binding positions include 53–54, Gln131, 177–179, Glu197, Arg202, 243–244, 268–272, 278–279, and Tyr327; these read GG, GMG, NA, QTSAH, and YL. The active site involves Cys415. Residue Gly497 coordinates NAD(+).

The protein belongs to the urocanase family. It depends on NAD(+) as a cofactor.

The protein localises to the cytoplasm. The catalysed reaction is 4-imidazolone-5-propanoate = trans-urocanate + H2O. It functions in the pathway amino-acid degradation; L-histidine degradation into L-glutamate; N-formimidoyl-L-glutamate from L-histidine: step 2/3. Its function is as follows. Catalyzes the conversion of urocanate to 4-imidazolone-5-propionate. The sequence is that of Urocanate hydratase from Chelativorans sp. (strain BNC1).